The sequence spans 121 residues: uncharacterized protein (121 aa).

The chain crosses the membrane as a helical span at residues 11-31; that stretch reads IFQFFVFPFYYFLLIITEIGF.

It localises to the membrane. This is an uncharacterized protein from Schizosaccharomyces pombe (strain 972 / ATCC 24843) (Fission yeast).